The following is a 486-amino-acid chain: Galactose-1-phosphate uridylyltransferase (486 aa).

The protein belongs to the galactose-1-phosphate uridylyltransferase type 2 family.

It localises to the cytoplasm. The catalysed reaction is alpha-D-galactose 1-phosphate + UDP-alpha-D-glucose = alpha-D-glucose 1-phosphate + UDP-alpha-D-galactose. The protein operates within carbohydrate metabolism; galactose metabolism. The chain is Galactose-1-phosphate uridylyltransferase from Pediococcus pentosaceus (strain ATCC 25745 / CCUG 21536 / LMG 10740 / 183-1w).